Here is a 340-residue protein sequence, read N- to C-terminus: Citramalyl-CoA lyase, mitochondrial (340 aa).

Residues 1 to 22 constitute a mitochondrion transit peptide; the sequence is MALRLLRRAARGAAAAALLRLK. The substrate site is built by tyrosine 50, lysine 57, and lysine 61. 2 positions are modified to N6-acetyllysine: lysine 57 and lysine 61. An N6-acetyllysine; alternate mark is found at lysine 82 and lysine 92. Residues lysine 82 and lysine 92 each carry the N6-succinyllysine; alternate modification. A substrate-binding site is contributed by arginine 107. The Mg(2+) site is built by glutamate 171 and aspartate 206. 272–273 contacts substrate; that stretch reads IH. Lysine 309 bears the N6-succinyllysine mark. Aspartate 320 is an active-site residue.

This sequence belongs to the HpcH/HpaI aldolase family. Citrate lyase beta subunit-like subfamily. As to quaternary structure, homotrimer. Mg(2+) is required as a cofactor.

The protein resides in the mitochondrion. It catalyses the reaction glyoxylate + acetyl-CoA + H2O = (S)-malate + CoA + H(+). It carries out the reaction propanoyl-CoA + glyoxylate + H2O = 3-methylmalate + CoA + H(+). The enzyme catalyses (3S)-citramalyl-CoA = pyruvate + acetyl-CoA. The catalysed reaction is (S)-malyl-CoA + H2O = (S)-malate + CoA + H(+). Functionally, mitochondrial citramalyl-CoA lyase indirectly involved in the vitamin B12 metabolism. Converts citramalyl-CoA into acetyl-CoA and pyruvate in the C5-dicarboxylate catabolism pathway. The C5-dicarboxylate catabolism pathway is required to detoxify itaconate, a vitamin B12-poisoning metabolite. Also acts as a malate synthase in vitro, converting glyoxylate and acetyl-CoA to malate. Also displays malyl-CoA thioesterase activity. Also acts as a beta-methylmalate synthase in vitro, by mediating conversion of glyoxylate and propionyl-CoA to beta-methylmalate. Also has very weak citramalate synthase activity in vitro. The sequence is that of Citramalyl-CoA lyase, mitochondrial from Homo sapiens (Human).